A 284-amino-acid chain; its full sequence is L-ribulose-5-phosphate 3-epimerase UlaE (284 aa).

Belongs to the L-ribulose-5-phosphate 3-epimerase family.

It catalyses the reaction L-ribulose 5-phosphate = L-xylulose 5-phosphate. The protein operates within cofactor degradation; L-ascorbate degradation; D-xylulose 5-phosphate from L-ascorbate: step 3/4. In terms of biological role, catalyzes the isomerization of L-xylulose-5-phosphate to L-ribulose-5-phosphate. Is involved in the anaerobic L-ascorbate utilization. This chain is L-ribulose-5-phosphate 3-epimerase UlaE, found in Shigella boydii serotype 18 (strain CDC 3083-94 / BS512).